Consider the following 472-residue polypeptide: Putative F-box/LRR-repeat protein At5g54820 (472 aa).

Residues 6 to 54 (QDRLSSLPDILLIMIISFLPLKECVRTSVLSKRWRYLCLETTNLSFKES) enclose the F-box domain. LRR repeat units lie at residues 58 to 87 (NPDI…SITQ), 135 to 164 (NGDI…KIYG), 183 to 208 (IGWV…SIKN), 225 to 250 (VIEH…KYSG), 283 to 308 (SSRI…TVCP), and 338 to 363 (MHTK…GFDI).

In Arabidopsis thaliana (Mouse-ear cress), this protein is Putative F-box/LRR-repeat protein At5g54820.